A 375-amino-acid chain; its full sequence is MYIDRIYLKDFRNLTENLIKLDNRLNVFVGLNGQGKTNFLEAVYLMGTASSHRTNADRELIRWNQDRAVVQLYLVKRDEKLKISLEINKKVKKLEINDVPQERVSELLGNLNVVLFSPEDLKLVKEGPHFRRKFLDTELSQVKPYYHYLLKKYNHILSQRNNLLKELMTGNKSDTTLLEVWDEQLVEIGAKIIQNRIEVIDKLKILARLSHRQITDGLENITLSYESSLSDRIEEKELEEIKIIFRNKLVNNRNEEITRGYTLAGPQRDDLKITMNGIDIRKYGSQGQQRTAALSLKLAELEFMKSEQGEYPVLLLDDVFSELDNKRRHRLIDIMAHRVQTFITATDFFNLNEINTPSIKVFKVRNGLITRYKSL.

30–37 (GLNGQGKT) serves as a coordination point for ATP.

The protein belongs to the RecF family.

Its subcellular location is the cytoplasm. In terms of biological role, the RecF protein is involved in DNA metabolism; it is required for DNA replication and normal SOS inducibility. RecF binds preferentially to single-stranded, linear DNA. It also seems to bind ATP. This chain is DNA replication and repair protein RecF, found in Halothermothrix orenii (strain H 168 / OCM 544 / DSM 9562).